The chain runs to 118 residues: Ribonuclease P protein component (118 aa).

This sequence belongs to the RnpA family. As to quaternary structure, consists of a catalytic RNA component (M1 or rnpB) and a protein subunit.

The enzyme catalyses Endonucleolytic cleavage of RNA, removing 5'-extranucleotides from tRNA precursor.. Functionally, RNaseP catalyzes the removal of the 5'-leader sequence from pre-tRNA to produce the mature 5'-terminus. It can also cleave other RNA substrates such as 4.5S RNA. The protein component plays an auxiliary but essential role in vivo by binding to the 5'-leader sequence and broadening the substrate specificity of the ribozyme. In Shewanella oneidensis (strain ATCC 700550 / JCM 31522 / CIP 106686 / LMG 19005 / NCIMB 14063 / MR-1), this protein is Ribonuclease P protein component.